The primary structure comprises 613 residues: Kelch-like protein 36 (613 aa).

A BTB domain is found at 45 to 112 (CDVVLVVEEQ…LYSSELELDG (68 aa)). In terms of domain architecture, BACK spans 147–249 (YLYLQELASI…PEDILLQRVK (103 aa)). Kelch repeat units lie at residues 294-343 (CLLF…VLGG), 344-395 (FIFI…SIED), 396-442 (MLVA…IYKD), 444-491 (VYIS…SLGD), 492-544 (SIYS…VWQG), and 545-593 (RIYI…VCAL).

As to quaternary structure, interacts with CUL3.

Its pathway is protein modification; protein ubiquitination. Functionally, probable substrate-specific adapter of an E3 ubiquitin-protein ligase complex which mediates the ubiquitination and subsequent proteasomal degradation of target proteins. In Mus musculus (Mouse), this protein is Kelch-like protein 36 (Klhl36).